The chain runs to 1404 residues: DNA-directed RNA polymerase subunit beta' (1404 aa).

Residues C70, C72, C85, and C88 each coordinate Zn(2+). Residues D460, D462, and D464 each contribute to the Mg(2+) site. Residues C814, C888, C895, and C898 each contribute to the Zn(2+) site.

The protein belongs to the RNA polymerase beta' chain family. The RNAP catalytic core consists of 2 alpha, 1 beta, 1 beta' and 1 omega subunit. When a sigma factor is associated with the core the holoenzyme is formed, which can initiate transcription. It depends on Mg(2+) as a cofactor. Zn(2+) serves as cofactor.

It catalyses the reaction RNA(n) + a ribonucleoside 5'-triphosphate = RNA(n+1) + diphosphate. DNA-dependent RNA polymerase catalyzes the transcription of DNA into RNA using the four ribonucleoside triphosphates as substrates. This Shewanella piezotolerans (strain WP3 / JCM 13877) protein is DNA-directed RNA polymerase subunit beta'.